Here is a 121-residue protein sequence, read N- to C-terminus: Class I hydrophobin 2 (121 aa).

The N-terminal stretch at Met1–Ala18 is a signal peptide. 4 cysteine pairs are disulfide-bonded: Cys52-Cys101, Cys60-Cys94, Cys61-Cys79, and Cys102-Cys116. Asn83 carries N-linked (GlcNAc...) asparagine glycosylation.

It belongs to the fungal hydrophobin family. In terms of assembly, self-assembles to form functional amyloid fibrils called rodlets. Self-assembly into fibrillar rodlets occurs spontaneously at hydrophobic:hydrophilic interfaces and the rodlets further associate laterally to form amphipathic monolayers. Expressed in conidia and aerial hyphae.

The protein localises to the secreted. Its subcellular location is the cell wall. Its function is as follows. Aerial growth, conidiation, and dispersal of filamentous fungi in the environment rely upon a capability of their secreting small amphipathic proteins called hydrophobins (HPBs) with low sequence identity. Class I can self-assemble into an outermost layer of rodlet bundles on aerial cell surfaces, conferring cellular hydrophobicity that supports fungal growth, development and dispersal; whereas Class II form highly ordered films at water-air interfaces through intermolecular interactions but contribute nothing to the rodlet structure. Hcf-2 is a class I hydrophobin that is not necessary for the development of hyphae or conidia but contributes to cell surface hydrophobicity. This chain is Class I hydrophobin 2, found in Passalora fulva (Tomato leaf mold).